A 517-amino-acid polypeptide reads, in one-letter code: MSTSADTDTIKKPILAVPEPALADTHSEEISRSGEEHESENNEHSDEEGDNYSEREQSVSTEPLDTLPLRKKLKNLSYITFFAIGIGLLWPWNCILSASQYFKHDIFKDTSIWAKIFTSSMMSFSTISSMLFNIYLAKRQYKYSRRVINGLVWEIIVFTVMCFFTILHFLLPKWFNFMFIMMLVVISSMGTAMTQNGIMAIANVFGSEYSQGVMVGQAVAGVLPSLVLFALAFIENSSVSTTGGILLYFFTTTLVVTICVVMFSVSKISRKVNENWNVEDGHITDVLLGSLRSNEEEIRIVGRIDQMEDEDHRRTNGTRDDNDEGEELQLKVPFEVLFAKLKYLVLSIFTTFVVTLVFPVFASATYVTGLPLSNAQYIPLIFTLWNLGDLYGRVIADWPMFRDQKFTPRKTFIYSLLRVAAIPLFLMFTAITSSSSGDEEHNGSVIVDLCYMLLQFLFGVTNGHVISMSFMKVPEQLDNDDEKEAAGGFTNIFVSTGLALGSIISYVFVFIIDFIIR.

The tract at residues 1 to 63 (MSTSADTDTI…EREQSVSTEP (63 aa)) is disordered. Residues 25–44 (THSEEISRSGEEHESENNEH) show a composition bias toward basic and acidic residues. Phosphoserine occurs at positions 45 and 58. The next 11 helical transmembrane spans lie at 76–96 (LSYITFFAIGIGLLWPWNCIL), 116–136 (IFTSSMMSFSTISSMLFNIYL), 151–171 (LVWEIIVFTVMCFFTILHFLL), 174–194 (WFNFMFIMMLVVISSMGTAMT), 214–234 (MVGQAVAGVLPSLVLFALAFI), 243–263 (GGILLYFFTTTLVVTICVVMF), 344–364 (LVLSIFTTFVVTLVFPVFASA), 367–387 (VTGLPLSNAQYIPLIFTLWNL), 411–431 (TFIYSLLRVAAIPLFLMFTAI), 446–466 (IVDLCYMLLQFLFGVTNGHVI), and 492–512 (IFVSTGLALGSIISYVFVFII).

The protein belongs to the SLC29A/ENT transporter (TC 2.A.57) family.

The protein resides in the membrane. In terms of biological role, has broad nucleoside selectivity (uridine, adenosine and cytidine) and most likely functions to transport nucleosides across intracellular membranes. The protein is Nucleoside transporter FUN26 (FUN26) of Saccharomyces cerevisiae (strain ATCC 204508 / S288c) (Baker's yeast).